A 406-amino-acid chain; its full sequence is uncharacterized protein (406 aa).

A disordered region spans residues 1–36 (MDRVRSLIGNRRGRRHNRQHPPYPHSGSPSTVNLLG).

To yeast YMR316w.

This is an uncharacterized protein from Saccharomyces cerevisiae (strain ATCC 204508 / S288c) (Baker's yeast).